The following is a 449-amino-acid chain: Elongation factor 1-alpha (449 aa).

Residues 5-230 (KVHINIVVIG…DQIQEPKRPS (226 aa)) enclose the tr-type G domain. A G1 region spans residues 14 to 21 (GHVDSGKS). 14-21 (GHVDSGKS) is a binding site for GTP. The residue at position 55 (lysine 55) is an N6,N6-dimethyllysine. The segment at 70 to 74 (GITID) is G2. Lysine 79 is modified (N6,N6,N6-trimethyllysine). Residues 91-94 (DAPG) are G3. GTP contacts are provided by residues 91-95 (DAPGH) and 153-156 (NKMD). A G4 region spans residues 153–156 (NKMD). At lysine 187 the chain carries N6,N6,N6-trimethyllysine. Residues 194-196 (SGF) are G5. Lysine 261 is modified (N6-methyllysine). At glutamate 289 the chain carries 5-glutamyl glycerylphosphorylethanolamine. Lysine 306 is subject to N6,N6,N6-trimethyllysine. 5-glutamyl glycerylphosphorylethanolamine is present on glutamate 362. The residue at position 396 (lysine 396) is an N6,N6,N6-trimethyllysine.

Belongs to the TRAFAC class translation factor GTPase superfamily. Classic translation factor GTPase family. EF-Tu/EF-1A subfamily.

The protein resides in the cytoplasm. In terms of biological role, this protein promotes the GTP-dependent binding of aminoacyl-tRNA to the A-site of ribosomes during protein biosynthesis. The chain is Elongation factor 1-alpha (EF1) from Manihot esculenta (Cassava).